We begin with the raw amino-acid sequence, 486 residues long: Glutamyl-tRNA(Gln) amidotransferase subunit A (486 aa).

Active-site charge relay system residues include Lys76 and Ser151. Catalysis depends on Ser175, which acts as the Acyl-ester intermediate.

Belongs to the amidase family. GatA subfamily. In terms of assembly, heterotrimer of A, B and C subunits.

The enzyme catalyses L-glutamyl-tRNA(Gln) + L-glutamine + ATP + H2O = L-glutaminyl-tRNA(Gln) + L-glutamate + ADP + phosphate + H(+). Functionally, allows the formation of correctly charged Gln-tRNA(Gln) through the transamidation of misacylated Glu-tRNA(Gln) in organisms which lack glutaminyl-tRNA synthetase. The reaction takes place in the presence of glutamine and ATP through an activated gamma-phospho-Glu-tRNA(Gln). This chain is Glutamyl-tRNA(Gln) amidotransferase subunit A, found in Nitrosomonas europaea (strain ATCC 19718 / CIP 103999 / KCTC 2705 / NBRC 14298).